The sequence spans 223 residues: Deoxyribose-phosphate aldolase 2 (223 aa).

Aspartate 92 (proton donor/acceptor) is an active-site residue. The active-site Schiff-base intermediate with acetaldehyde is the lysine 154. Catalysis depends on lysine 183, which acts as the Proton donor/acceptor.

It belongs to the DeoC/FbaB aldolase family. DeoC type 1 subfamily.

Its subcellular location is the cytoplasm. The enzyme catalyses 2-deoxy-D-ribose 5-phosphate = D-glyceraldehyde 3-phosphate + acetaldehyde. It participates in carbohydrate degradation; 2-deoxy-D-ribose 1-phosphate degradation; D-glyceraldehyde 3-phosphate and acetaldehyde from 2-deoxy-alpha-D-ribose 1-phosphate: step 2/2. In terms of biological role, catalyzes a reversible aldol reaction between acetaldehyde and D-glyceraldehyde 3-phosphate to generate 2-deoxy-D-ribose 5-phosphate. In Oceanobacillus iheyensis (strain DSM 14371 / CIP 107618 / JCM 11309 / KCTC 3954 / HTE831), this protein is Deoxyribose-phosphate aldolase 2.